The following is a 617-amino-acid chain: Phenylalanine--tRNA ligase beta subunit (617 aa).

In terms of domain architecture, B5 spans 306–383 (IQEKQINAQV…IGYGYDNLKK (78 aa)). Mg(2+) contacts are provided by aspartate 361, aspartate 367, glutamate 370, and aspartate 371.

It belongs to the phenylalanyl-tRNA synthetase beta subunit family. Type 2 subfamily. Tetramer of two alpha and two beta subunits. Mg(2+) serves as cofactor.

Its subcellular location is the cytoplasm. It carries out the reaction tRNA(Phe) + L-phenylalanine + ATP = L-phenylalanyl-tRNA(Phe) + AMP + diphosphate + H(+). This is Phenylalanine--tRNA ligase beta subunit (phesB) from Dictyostelium discoideum (Social amoeba).